The primary structure comprises 115 residues: NADH-ubiquinone oxidoreductase chain 3 (115 aa).

Transmembrane regions (helical) follow at residues 3–23, 55–75, and 84–104; these read LIMTLFINITLTSLLVLIAFW, FFLVAITFLLFDLEIALLLPL, and LTTMLTTALLLISLLAVSLAY.

The protein belongs to the complex I subunit 3 family. Core subunit of respiratory chain NADH dehydrogenase (Complex I) which is composed of 45 different subunits. Interacts with TMEM186. Interacts with TMEM242.

The protein resides in the mitochondrion inner membrane. The catalysed reaction is a ubiquinone + NADH + 5 H(+)(in) = a ubiquinol + NAD(+) + 4 H(+)(out). Its function is as follows. Core subunit of the mitochondrial membrane respiratory chain NADH dehydrogenase (Complex I) which catalyzes electron transfer from NADH through the respiratory chain, using ubiquinone as an electron acceptor. Essential for the catalytic activity of complex I. In Ailurus fulgens (Himalayan red panda), this protein is NADH-ubiquinone oxidoreductase chain 3.